A 727-amino-acid chain; its full sequence is Glycerol-3-phosphate dehydrogenase, mitochondrial (727 aa).

The N-terminal 42 residues, 1–42, are a transit peptide targeting the mitochondrion; it reads MAFQKAVKGTILVGGGALATVLGLSQFAHYRRKQMNLAYVKA. 71 to 99 contributes to the FAD binding site; that stretch reads DILVIGGGATGSGCALDAVTRGLKTALVE. Y601 is subject to Phosphotyrosine. EF-hand domains follow at residues 623-658 and 659-694; these read SDIDRYKKRFHKFDADKKGFITIVDVQRVLESINVQ and MDENTLHEILNEVDLNKNGQVELNEFLQLMSAIQKG. Positions 672, 674, 676, 678, and 683 each coordinate Ca(2+).

The protein belongs to the FAD-dependent glycerol-3-phosphate dehydrogenase family. Requires FAD as cofactor.

It is found in the mitochondrion. It catalyses the reaction a quinone + sn-glycerol 3-phosphate = dihydroxyacetone phosphate + a quinol. It functions in the pathway polyol metabolism; glycerol degradation via glycerol kinase pathway; glycerone phosphate from sn-glycerol 3-phosphate (aerobic route): step 1/1. With respect to regulation, calcium-binding enhance the activity of the enzyme. Functionally, calcium-responsive mitochondrial glycerol-3-phosphate dehydrogenase which seems to be a key component of the pancreatic beta-cell glucose-sensing device. The chain is Glycerol-3-phosphate dehydrogenase, mitochondrial (GPD2) from Macaca fascicularis (Crab-eating macaque).